A 361-amino-acid polypeptide reads, in one-letter code: T-box-containing protein TBX6L (361 aa).

The T-box DNA-binding region spans Leu-36 to Glu-209. 2 disordered regions span residues Phe-203–Glu-259 and His-280–Ser-323. 2 stretches are compositionally biased toward basic and acidic residues: residues Gly-206–Ala-220 and Lys-234–Glu-259. Over residues His-280–Ala-290 the composition is skewed to low complexity.

The protein resides in the nucleus. In terms of biological role, may be involved in regulating somitogenesis. This chain is T-box-containing protein TBX6L (TBX6L), found in Gallus gallus (Chicken).